The chain runs to 185 residues: Ribose 1,5-bisphosphate phosphokinase PhnN (185 aa).

10–17 (GPSGSGKD) contributes to the ATP binding site.

It belongs to the ribose 1,5-bisphosphokinase family.

The enzyme catalyses alpha-D-ribose 1,5-bisphosphate + ATP = 5-phospho-alpha-D-ribose 1-diphosphate + ADP. The protein operates within metabolic intermediate biosynthesis; 5-phospho-alpha-D-ribose 1-diphosphate biosynthesis; 5-phospho-alpha-D-ribose 1-diphosphate from D-ribose 5-phosphate (route II): step 3/3. In terms of biological role, catalyzes the phosphorylation of ribose 1,5-bisphosphate to 5-phospho-D-ribosyl alpha-1-diphosphate (PRPP). This Shigella dysenteriae serotype 1 (strain Sd197) protein is Ribose 1,5-bisphosphate phosphokinase PhnN.